The primary structure comprises 424 residues: uncharacterized protein (424 aa).

This is an uncharacterized protein from Orgyia pseudotsugata (Douglas-fir tussock moth).